The chain runs to 196 residues: ATP synthase subunit b (196 aa).

Residues 24 to 44 (PLSELLIGTLSFALLVAFFFW) traverse the membrane as a helical segment.

This sequence belongs to the ATPase B chain family. In terms of assembly, F-type ATPases have 2 components, F(1) - the catalytic core - and F(0) - the membrane proton channel. F(1) has five subunits: alpha(3), beta(3), gamma(1), delta(1), epsilon(1). F(0) has three main subunits: a(1), b(2) and c(10-14). The alpha and beta chains form an alternating ring which encloses part of the gamma chain. F(1) is attached to F(0) by a central stalk formed by the gamma and epsilon chains, while a peripheral stalk is formed by the delta and b chains.

The protein resides in the cell membrane. Its function is as follows. F(1)F(0) ATP synthase produces ATP from ADP in the presence of a proton or sodium gradient. F-type ATPases consist of two structural domains, F(1) containing the extramembraneous catalytic core and F(0) containing the membrane proton channel, linked together by a central stalk and a peripheral stalk. During catalysis, ATP synthesis in the catalytic domain of F(1) is coupled via a rotary mechanism of the central stalk subunits to proton translocation. In terms of biological role, component of the F(0) channel, it forms part of the peripheral stalk, linking F(1) to F(0). The polypeptide is ATP synthase subunit b (Frankia casuarinae (strain DSM 45818 / CECT 9043 / HFP020203 / CcI3)).